The sequence spans 521 residues: Glutamyl-tRNA(Gln) amidotransferase subunit A (521 aa).

Active-site charge relay system residues include lysine 79 and serine 187. Serine 211 functions as the Acyl-ester intermediate in the catalytic mechanism.

This sequence belongs to the amidase family. GatA subfamily. Heterotrimer of A, B and C subunits.

The catalysed reaction is L-glutamyl-tRNA(Gln) + L-glutamine + ATP + H2O = L-glutaminyl-tRNA(Gln) + L-glutamate + ADP + phosphate + H(+). In terms of biological role, allows the formation of correctly charged Gln-tRNA(Gln) through the transamidation of misacylated Glu-tRNA(Gln) in organisms which lack glutaminyl-tRNA synthetase. The reaction takes place in the presence of glutamine and ATP through an activated gamma-phospho-Glu-tRNA(Gln). This chain is Glutamyl-tRNA(Gln) amidotransferase subunit A, found in Mesorhizobium japonicum (strain LMG 29417 / CECT 9101 / MAFF 303099) (Mesorhizobium loti (strain MAFF 303099)).